The primary structure comprises 140 residues: Putative transmembrane protein 49 (140 aa).

The next 2 helical transmembrane spans lie at 23–43 and 93–110; these read LIMS…IGGV and IAVH…RYMY.

The protein localises to the host membrane. The sequence is that of Putative transmembrane protein 49 (SIFV0049) from Saccharolobus islandicus (Sulfolobus islandicus).